A 628-amino-acid chain; its full sequence is Probable potassium transport system protein Kup (628 aa).

A run of 11 helical transmembrane segments spans residues 56–76 (ILSL…VLLI), 109–129 (LILG…TPAI), 141–161 (AAPG…TLLF), 174–194 (FFGP…VVHI), 209–229 (ALAF…AVVL), 253–273 (WFSL…AMLL), 295–315 (LIVL…TAAF), 343–363 (IYVP…VVTF), 372–392 (AYGI…FFVI), 400–420 (WALC…FFAA), and 425–445 (ILDG…LMMT).

This sequence belongs to the HAK/KUP transporter (TC 2.A.72) family.

It is found in the cell inner membrane. The catalysed reaction is K(+)(in) + H(+)(in) = K(+)(out) + H(+)(out). Transport of potassium into the cell. Likely operates as a K(+):H(+) symporter. The chain is Probable potassium transport system protein Kup from Methylibium petroleiphilum (strain ATCC BAA-1232 / LMG 22953 / PM1).